Reading from the N-terminus, the 81-residue chain is Acyl carrier protein (81 aa).

The 79-residue stretch at 2-80 folds into the Carrier domain; the sequence is ASKEEILAGL…DAVDFIDGAQ (79 aa). Ser40 is modified (O-(pantetheine 4'-phosphoryl)serine).

The protein belongs to the acyl carrier protein (ACP) family. In terms of processing, 4'-phosphopantetheine is transferred from CoA to a specific serine of apo-ACP by AcpS. This modification is essential for activity because fatty acids are bound in thioester linkage to the sulfhydryl of the prosthetic group.

It is found in the cytoplasm. Its pathway is lipid metabolism; fatty acid biosynthesis. In terms of biological role, carrier of the growing fatty acid chain in fatty acid biosynthesis. This chain is Acyl carrier protein, found in Micrococcus luteus (strain ATCC 4698 / DSM 20030 / JCM 1464 / CCM 169 / CCUG 5858 / IAM 1056 / NBRC 3333 / NCIMB 9278 / NCTC 2665 / VKM Ac-2230) (Micrococcus lysodeikticus).